The chain runs to 405 residues: Enoyl-[acyl-carrier-protein] reductase [NADH] (405 aa).

Residues 51-56 (GASSGY), 77-78 (FE), 114-115 (DA), and 142-143 (LA) contribute to the NAD(+) site. Tyrosine 228 serves as a coordination point for substrate. Tyrosine 238 functions as the Proton donor in the catalytic mechanism. NAD(+)-binding positions include lysine 247 and 276 to 278 (VVT).

It belongs to the TER reductase family. Monomer.

The enzyme catalyses a 2,3-saturated acyl-[ACP] + NAD(+) = a (2E)-enoyl-[ACP] + NADH + H(+). Its pathway is lipid metabolism; fatty acid biosynthesis. In terms of biological role, involved in the final reduction of the elongation cycle of fatty acid synthesis (FAS II). Catalyzes the reduction of a carbon-carbon double bond in an enoyl moiety that is covalently linked to an acyl carrier protein (ACP). The protein is Enoyl-[acyl-carrier-protein] reductase [NADH] of Chromohalobacter salexigens (strain ATCC BAA-138 / DSM 3043 / CIP 106854 / NCIMB 13768 / 1H11).